Reading from the N-terminus, the 78-residue chain is Large ribosomal subunit protein bL28 (78 aa).

The protein belongs to the bacterial ribosomal protein bL28 family.

The polypeptide is Large ribosomal subunit protein bL28 (Psychrobacter sp. (strain PRwf-1)).